A 684-amino-acid chain; its full sequence is Protein EXECUTER 1, chloroplastic (684 aa).

Polar residues predominate over residues 1 to 31 (MPSLSTPPSQNLAFSPAASATSSRLTPSSKR). The transit peptide at 1 to 46 (MPSLSTPPSQNLAFSPAASATSSRLTPSSKRSFYPHRLPDPTALCR) directs the protein to the chloroplast. Positions 1–66 (MPSLSTPPSQ…SSSSSDDNPR (66 aa)) are disordered. The segment covering 48-61 (SSSSGSNSSSSSSS) has biased composition (low complexity). One can recognise a UVR domain in the interval 127 to 162 (DRLLSVLKSQLNRAIKREDYEDAARLKVAIAATATN). The interval 278 to 318 (TLTPGRFLTSPGRKEDTGNLAVESSEDEESDNSDDDSDLLE) is disordered. The segment covering 301–318 (SSEDEESDNSDDDSDLLE) has biased composition (acidic residues).

It localises to the plastid. The protein localises to the chloroplast. Functionally, together with EX2, enables higher plants to perceive singlet oxygen as a stress signal in plastid that activates a genetically determined nuclear stress response program which triggers a programmed cell death (PCD). This transfer of singlet oxygen-induced stress-related signals from the plastid to the nucleus that triggers genetically controlled PCD pathway is unique to photosynthetic eukaryotes and operates under mild stress conditions, impeding photosystem II (PSII) without causing photooxidative damage of the plant. This is Protein EXECUTER 1, chloroplastic from Arabidopsis thaliana (Mouse-ear cress).